The following is a 503-amino-acid chain: DEAD-box ATP-dependent RNA helicase CshA (503 aa).

A Q motif motif is present at residues 2–30 (QNFKELGISDKTVETLEAMGFKEPTPIQK). The Helicase ATP-binding domain occupies 33 to 203 (IPYTLEGKDI…QQFMKSPQIV (171 aa)). 46–53 (AQTGTGKT) contributes to the ATP binding site. The short motif at 150 to 153 (DEAD) is the DEAD box element. The Helicase C-terminal domain occupies 214-375 (QIDEYYTIVK…LRPPHRKEVL (162 aa)). Positions 436-503 (EKPLARKNRQ…KGRTFADLQK (68 aa)) are disordered. The span at 466-480 (KRSKGNFNKKKGKKT) shows a compositional bias: basic residues. Residues 481–490 (DRRERQDKGR) are compositionally biased toward basic and acidic residues.

This sequence belongs to the DEAD box helicase family. CshA subfamily. Oligomerizes, may be a member of the RNA degradosome.

The protein resides in the cytoplasm. The enzyme catalyses ATP + H2O = ADP + phosphate + H(+). In terms of biological role, DEAD-box RNA helicase possibly involved in RNA degradation. Unwinds dsRNA in both 5'- and 3'-directions, has RNA-dependent ATPase activity. The sequence is that of DEAD-box ATP-dependent RNA helicase CshA from Staphylococcus haemolyticus (strain JCSC1435).